A 123-amino-acid chain; its full sequence is Large ribosomal subunit protein uL18 (123 aa).

It belongs to the universal ribosomal protein uL18 family. As to quaternary structure, part of the 50S ribosomal subunit; part of the 5S rRNA/L5/L18/L25 subcomplex. Contacts the 5S and 23S rRNAs.

In terms of biological role, this is one of the proteins that bind and probably mediate the attachment of the 5S RNA into the large ribosomal subunit, where it forms part of the central protuberance. The polypeptide is Large ribosomal subunit protein uL18 (Symbiobacterium thermophilum (strain DSM 24528 / JCM 14929 / IAM 14863 / T)).